Here is a 236-residue protein sequence, read N- to C-terminus: Probable 6-phosphogluconolactonase (236 aa).

The protein belongs to the glucosamine/galactosamine-6-phosphate isomerase family. 6-phosphogluconolactonase subfamily.

It catalyses the reaction 6-phospho-D-glucono-1,5-lactone + H2O = 6-phospho-D-gluconate + H(+). The protein operates within carbohydrate degradation; pentose phosphate pathway; D-ribulose 5-phosphate from D-glucose 6-phosphate (oxidative stage): step 2/3. Hydrolysis of 6-phosphogluconolactone to 6-phosphogluconate. The chain is Probable 6-phosphogluconolactonase (pgl) from Dictyostelium discoideum (Social amoeba).